The chain runs to 305 residues: Coiled-coil domain-containing protein 83 (305 aa).

The tract at residues 1–25 is disordered; sequence MDSSAKGSKKDAPDGPPKDSKLPVS. The segment covering 8 to 21 has biased composition (basic and acidic residues); it reads SKKDAPDGPPKDSK. The stretch at 37–186 forms a coiled coil; it reads ENAVERFMFH…LEDEKKRISR (150 aa).

In Mus musculus (Mouse), this protein is Coiled-coil domain-containing protein 83 (Ccdc83).